Reading from the N-terminus, the 59-residue chain is Large ribosomal subunit protein uL30 (59 aa).

The protein belongs to the universal ribosomal protein uL30 family. In terms of assembly, part of the 50S ribosomal subunit.

This chain is Large ribosomal subunit protein uL30, found in Citrobacter koseri (strain ATCC BAA-895 / CDC 4225-83 / SGSC4696).